The sequence spans 372 residues: MSSGLDLELSFSQSLQGLGLSPQVAHLIWLPLPMLLVLTAAMVGVLVTVWLERKISAAVQQRIGPEYAGALGVLQPMADGLKLLVKEDVIPVRADGLLFTLGPVLVLVPVILSWLIVPFGQNLLISNVGIGIFLWISLSSIQPIGLLMSGYASNNKYSLLGGLRAAAQSISYEIPLALAVLAVVMMSNSLSTVDIVAQQNGAGLLSWNVWRQPVGFLIFWICALAECERLPFDLPEAEEELVAGYQTEYAGMKFALFYLGSYINLVLSSLLVAVLYLGGWGFPIPVEWLAGWLGQSVDAPLVQVITGSVGIVMTVLKAYLLVFLAILLRWTTPRVRIDQLLDLGWKFLLPIALGNLLITAALKLAFPVAFGG.

Helical transmembrane passes span 27 to 47, 97 to 117, 128 to 148, 166 to 186, 204 to 224, 266 to 286, 308 to 328, and 347 to 367; these read LIWL…GVLV, LLFT…WLIV, VGIG…GLLM, AAQS…VVMM, LLSW…ICAL, VLSS…PIPV, SVGI…AILL, and FLLP…LAFP.

This sequence belongs to the complex I subunit 1 family. NDH-1 is composed of at least 11 different subunits.

The protein localises to the cellular thylakoid membrane. It catalyses the reaction a plastoquinone + NADH + (n+1) H(+)(in) = a plastoquinol + NAD(+) + n H(+)(out). The enzyme catalyses a plastoquinone + NADPH + (n+1) H(+)(in) = a plastoquinol + NADP(+) + n H(+)(out). Its function is as follows. NDH-1 shuttles electrons from an unknown electron donor, via FMN and iron-sulfur (Fe-S) centers, to quinones in the respiratory and/or the photosynthetic chain. The immediate electron acceptor for the enzyme in this species is believed to be plastoquinone. Couples the redox reaction to proton translocation, and thus conserves the redox energy in a proton gradient. This chain is NAD(P)H-quinone oxidoreductase subunit 1, found in Prochlorococcus marinus (strain MIT 9313).